Consider the following 71-residue polypeptide: Exodeoxyribonuclease 7 small subunit (71 aa).

This sequence belongs to the XseB family. In terms of assembly, heterooligomer composed of large and small subunits.

It is found in the cytoplasm. The enzyme catalyses Exonucleolytic cleavage in either 5'- to 3'- or 3'- to 5'-direction to yield nucleoside 5'-phosphates.. Bidirectionally degrades single-stranded DNA into large acid-insoluble oligonucleotides, which are then degraded further into small acid-soluble oligonucleotides. The sequence is that of Exodeoxyribonuclease 7 small subunit from Streptococcus uberis (strain ATCC BAA-854 / 0140J).